The sequence spans 677 residues: Transketolase 1 (677 aa).

Substrate is bound at residue His27. Thiamine diphosphate is bound by residues His66 and 114–116 (GPL). Asp155 contacts Mg(2+). Gly156 and Asn185 together coordinate thiamine diphosphate. Residues Asn185 and Ile187 each coordinate Mg(2+). Substrate contacts are provided by His261, Arg356, and Ser383. Residue His261 coordinates thiamine diphosphate. Positions 415 and 442 each coordinate thiamine diphosphate. Glu415 (proton donor) is an active-site residue. Substrate-binding residues include His466, Asp474, and Arg525.

It belongs to the transketolase family. In terms of assembly, homodimer. Mg(2+) serves as cofactor. Ca(2+) is required as a cofactor. Requires Mn(2+) as cofactor. The cofactor is Co(2+). It depends on thiamine diphosphate as a cofactor.

The catalysed reaction is D-sedoheptulose 7-phosphate + D-glyceraldehyde 3-phosphate = aldehydo-D-ribose 5-phosphate + D-xylulose 5-phosphate. Functionally, catalyzes the transfer of a two-carbon ketol group from a ketose donor to an aldose acceptor, via a covalent intermediate with the cofactor thiamine pyrophosphate. The chain is Transketolase 1 (TKT1) from Candida albicans (Yeast).